Reading from the N-terminus, the 306-residue chain is Dermonecrotic toxin LiSicTox-alphaIA2ai (306 aa).

The N-terminal stretch at 1-18 is a signal peptide; the sequence is MLPYIALILVCWSVLSQA. Residues 19–26 constitute a propeptide that is removed on maturation; that stretch reads AQTDVEGR. His-38 is a catalytic residue. Mg(2+) contacts are provided by Glu-58 and Asp-60. His-74 acts as the Nucleophile in catalysis. 2 disulfide bridges follow: Cys-78-Cys-84 and Cys-80-Cys-223. Asp-118 provides a ligand contact to Mg(2+). Residue Asn-283 is glycosylated (N-linked (GlcNAc...) asparagine).

This sequence belongs to the arthropod phospholipase D family. Class II subfamily. Class IIa sub-subfamily. The cofactor is Mg(2+). In terms of tissue distribution, expressed by the venom gland.

It is found in the secreted. The enzyme catalyses an N-(acyl)-sphingosylphosphocholine = an N-(acyl)-sphingosyl-1,3-cyclic phosphate + choline. It catalyses the reaction an N-(acyl)-sphingosylphosphoethanolamine = an N-(acyl)-sphingosyl-1,3-cyclic phosphate + ethanolamine. The catalysed reaction is a 1-acyl-sn-glycero-3-phosphocholine = a 1-acyl-sn-glycero-2,3-cyclic phosphate + choline. It carries out the reaction a 1-acyl-sn-glycero-3-phosphoethanolamine = a 1-acyl-sn-glycero-2,3-cyclic phosphate + ethanolamine. Functionally, dermonecrotic toxins cleave the phosphodiester linkage between the phosphate and headgroup of certain phospholipids (sphingolipid and lysolipid substrates), forming an alcohol (often choline) and a cyclic phosphate. This toxin acts on sphingomyelin (SM). It may also act on ceramide phosphoethanolamine (CPE), lysophosphatidylcholine (LPC) and lysophosphatidylethanolamine (LPE), but not on lysophosphatidylserine (LPS), and lysophosphatidylglycerol (LPG). It acts by transphosphatidylation, releasing exclusively cyclic phosphate products as second products. It induces complement-dependent hemolysis, dermonecrosis, vascular permeability and platelet aggregation. This chain is Dermonecrotic toxin LiSicTox-alphaIA2ai, found in Loxosceles intermedia (Brown spider).